The primary structure comprises 215 residues: 3-demethoxyubiquinol 3-hydroxylase (215 aa).

Fe cation is bound by residues glutamate 64, glutamate 94, histidine 97, glutamate 146, glutamate 178, and histidine 181.

It belongs to the COQ7 family. Fe cation serves as cofactor.

It is found in the cell membrane. It catalyses the reaction a 5-methoxy-2-methyl-3-(all-trans-polyprenyl)benzene-1,4-diol + AH2 + O2 = a 3-demethylubiquinol + A + H2O. It participates in cofactor biosynthesis; ubiquinone biosynthesis. Functionally, catalyzes the hydroxylation of 2-nonaprenyl-3-methyl-6-methoxy-1,4-benzoquinol during ubiquinone biosynthesis. In Pseudomonas fluorescens (strain Pf0-1), this protein is 3-demethoxyubiquinol 3-hydroxylase.